We begin with the raw amino-acid sequence, 1627 residues long: DNA topoisomerase 2-beta (1627 aa).

ATP is bound by residues Asn-117, Asn-146, 174-176, and 187-194; these read SSN and GRNGYGAK. The segment at 368 to 370 is interaction with DNA; sequence KKK. ATP is bound at residue 402–404; the sequence is QTK. The 118-residue stretch at 481–598 folds into the Toprim domain; the sequence is CTLILTEGDS…SLLKHGFLEE (118 aa). Positions 487, 567, and 569 each coordinate Mg(2+). In terms of domain architecture, Topo IIA-type catalytic spans 741–1194; the sequence is IPSLVDGLKP…SASDLWKEDL (454 aa). Tyr-831 acts as the O-(5'-phospho-DNA)-tyrosine intermediate in catalysis. An interaction with DNA region spans residues 1016–1025; sequence KLQTSLTCNS. Disordered stretches follow at residues 1115 to 1144, 1224 to 1248, 1283 to 1365, and 1378 to 1627; these read AWKE…GSTS, KVGK…RRIV, EFGG…DSLL, and DFSK…DMFN. A compositionally biased stretch (low complexity) spans 1131–1144; that stretch reads NANDDASSASGSTS. A compositionally biased stretch (polar residues) spans 1296–1305; the sequence is TVNTAASGTK. The span at 1339–1349 shows a compositional bias: basic and acidic residues; sequence PWSDDESKSES. Acidic residues-rich tracts occupy residues 1381–1392 and 1412–1428; these read KEEDDAHDDDDA and REDE…DEYD. Basic and acidic residues-rich tracts occupy residues 1436-1448 and 1462-1471; these read PSPE…KKNQ and KTDDDTTKLD. Composition is skewed to basic residues over residues 1542-1552 and 1566-1578; these read GKGRGAKKRKT and KAPK…KSKK. The segment covering 1616–1627 has biased composition (acidic residues); sequence ESDEDDDFDMFN.

It belongs to the type II topoisomerase family. Homodimer. It depends on Mg(2+) as a cofactor. The cofactor is Mn(2+). Requires Ca(2+) as cofactor.

Its subcellular location is the nucleus. It is found in the nucleolus. The protein resides in the nucleoplasm. It carries out the reaction ATP-dependent breakage, passage and rejoining of double-stranded DNA.. Its function is as follows. Key decatenating enzyme that alters DNA topology by binding to two double-stranded DNA molecules, generating a double-stranded break in one of the strands, passing the intact strand through the broken strand, and religating the broken strand. Plays a role in B-cell differentiation. This chain is DNA topoisomerase 2-beta (TOP2B), found in Gallus gallus (Chicken).